The primary structure comprises 444 residues: Ribosomal protein uS12 methylthiotransferase RimO (444 aa).

The region spanning 2 to 118 (PSIGLLSLGC…IVEVVNHALE (117 aa)) is the MTTase N-terminal domain. [4Fe-4S] cluster-binding residues include cysteine 11, cysteine 47, cysteine 81, cysteine 156, cysteine 160, and cysteine 163. The Radical SAM core domain occupies 142-372 (STPSYTAYVK…MKLQREISLS (231 aa)). The TRAM domain maps to 375–444 (QKRIGQEIEV…EYDLMGELAQ (70 aa)).

Belongs to the methylthiotransferase family. RimO subfamily. It depends on [4Fe-4S] cluster as a cofactor.

The protein resides in the cytoplasm. The catalysed reaction is L-aspartate(89)-[ribosomal protein uS12]-hydrogen + (sulfur carrier)-SH + AH2 + 2 S-adenosyl-L-methionine = 3-methylsulfanyl-L-aspartate(89)-[ribosomal protein uS12]-hydrogen + (sulfur carrier)-H + 5'-deoxyadenosine + L-methionine + A + S-adenosyl-L-homocysteine + 2 H(+). Functionally, catalyzes the methylthiolation of an aspartic acid residue of ribosomal protein uS12. In Desulforamulus reducens (strain ATCC BAA-1160 / DSM 100696 / MI-1) (Desulfotomaculum reducens), this protein is Ribosomal protein uS12 methylthiotransferase RimO.